A 542-amino-acid chain; its full sequence is Calcium-dependent protein kinase 15 (542 aa).

Residues 1 to 73 (MGARASRHRQ…QAPQQAAAED (73 aa)) are disordered. A lipid anchor (N-myristoyl glycine) is attached at G2. Residues 12-21 (PDQSQSQSPS) show a composition bias toward low complexity. Positions 22 to 40 (PHHKHHHHHQTTRAPKPKP) are enriched in basic residues. Residues 41–60 (KPQPPPPQQPRSQPPPPPRH) show a composition bias toward pro residues. The span at 61–71 (QPQQAPQQAAA) shows a compositional bias: low complexity. A Protein kinase domain is found at 90-348 (YTFGRELGRG…AAEILNHPWI (259 aa)). ATP is bound by residues 96–104 (LGRGQFGVT) and K119. Catalysis depends on D214, which acts as the Proton acceptor. An autoinhibitory domain region spans residues 354–384 (APDKPLDITVISRMKQFRAMNKLKKVALKVV). 4 EF-hand domains span residues 391–426 (EEIV…LGTK), 427–462 (ISES…MNRL), 463–497 (EKED…KYDM), and 498–533 (GDEA…NSPE). Ca(2+) is bound by residues D404, D406, S408, T410, E415, D440, D442, N444, S446, E451, D476, D478, S480, E487, D511, D513, D515, R517, and E522.

It belongs to the protein kinase superfamily. Ser/Thr protein kinase family. CDPK subfamily.

It localises to the membrane. The enzyme catalyses L-seryl-[protein] + ATP = O-phospho-L-seryl-[protein] + ADP + H(+). It catalyses the reaction L-threonyl-[protein] + ATP = O-phospho-L-threonyl-[protein] + ADP + H(+). With respect to regulation, activated by calcium. Autophosphorylation may play an important role in the regulation of the kinase activity. Functionally, may play a role in signal transduction pathways that involve calcium as a second messenger. This chain is Calcium-dependent protein kinase 15, found in Oryza sativa subsp. japonica (Rice).